Consider the following 207-residue polypeptide: Large ribosomal subunit protein uL4 (207 aa).

Residues 49 to 77 (HAVKNRSAVRGGGKKPWRQKGTGRARQGS) are disordered. The span at 60-71 (GGKKPWRQKGTG) shows a compositional bias: basic residues.

This sequence belongs to the universal ribosomal protein uL4 family. Part of the 50S ribosomal subunit.

Its function is as follows. One of the primary rRNA binding proteins, this protein initially binds near the 5'-end of the 23S rRNA. It is important during the early stages of 50S assembly. It makes multiple contacts with different domains of the 23S rRNA in the assembled 50S subunit and ribosome. Functionally, forms part of the polypeptide exit tunnel. The protein is Large ribosomal subunit protein uL4 of Levilactobacillus brevis (strain ATCC 367 / BCRC 12310 / CIP 105137 / JCM 1170 / LMG 11437 / NCIMB 947 / NCTC 947) (Lactobacillus brevis).